Reading from the N-terminus, the 305-residue chain is Type II restriction enzyme SsoII (305 aa).

It carries out the reaction Endonucleolytic cleavage of DNA to give specific double-stranded fragments with terminal 5'-phosphates.. Functionally, a P subtype restriction enzyme that recognizes the double-stranded sequence 5'-CCNGG-3' and cleaves before C-1. The sequence is that of Type II restriction enzyme SsoII (ssoIIR) from Shigella sonnei.